The primary structure comprises 100 residues: Urease subunit gamma (100 aa).

The protein belongs to the urease gamma subunit family. Heterotrimer of UreA (gamma), UreB (beta) and UreC (alpha) subunits. Three heterotrimers associate to form the active enzyme.

It localises to the cytoplasm. It catalyses the reaction urea + 2 H2O + H(+) = hydrogencarbonate + 2 NH4(+). It functions in the pathway nitrogen metabolism; urea degradation; CO(2) and NH(3) from urea (urease route): step 1/1. In Agrobacterium fabrum (strain C58 / ATCC 33970) (Agrobacterium tumefaciens (strain C58)), this protein is Urease subunit gamma.